The sequence spans 713 residues: Polyribonucleotide nucleotidyltransferase (713 aa).

Mg(2+) is bound by residues D495 and D501. In terms of domain architecture, KH spans 562–621 (PRLLTLKIPVDMIGLVIGPGGKTIKRIVEETGAKVDIEDDGTVVVSSIDGAKALAAKQII). Residues 631–700 (DKVYLGTVTR…QKGRINLTRR (70 aa)) form the S1 motif domain.

It belongs to the polyribonucleotide nucleotidyltransferase family. It depends on Mg(2+) as a cofactor.

The protein localises to the cytoplasm. It catalyses the reaction RNA(n+1) + phosphate = RNA(n) + a ribonucleoside 5'-diphosphate. Functionally, involved in mRNA degradation. Catalyzes the phosphorolysis of single-stranded polyribonucleotides processively in the 3'- to 5'-direction. This is Polyribonucleotide nucleotidyltransferase from Gloeobacter violaceus (strain ATCC 29082 / PCC 7421).